A 184-amino-acid polypeptide reads, in one-letter code: ATP synthase subunit b, chloroplastic (184 aa).

Residues Leu27 to Leu49 traverse the membrane as a helical segment.

It belongs to the ATPase B chain family. In terms of assembly, F-type ATPases have 2 components, F(1) - the catalytic core - and F(0) - the membrane proton channel. F(1) has five subunits: alpha(3), beta(3), gamma(1), delta(1), epsilon(1). F(0) has four main subunits: a(1), b(1), b'(1) and c(10-14). The alpha and beta chains form an alternating ring which encloses part of the gamma chain. F(1) is attached to F(0) by a central stalk formed by the gamma and epsilon chains, while a peripheral stalk is formed by the delta, b and b' chains.

Its subcellular location is the plastid. It is found in the chloroplast thylakoid membrane. In terms of biological role, f(1)F(0) ATP synthase produces ATP from ADP in the presence of a proton or sodium gradient. F-type ATPases consist of two structural domains, F(1) containing the extramembraneous catalytic core and F(0) containing the membrane proton channel, linked together by a central stalk and a peripheral stalk. During catalysis, ATP synthesis in the catalytic domain of F(1) is coupled via a rotary mechanism of the central stalk subunits to proton translocation. Its function is as follows. Component of the F(0) channel, it forms part of the peripheral stalk, linking F(1) to F(0). The sequence is that of ATP synthase subunit b, chloroplastic from Morus indica (Mulberry).